Reading from the N-terminus, the 201-residue chain is Histidinol dehydrogenase (201 aa).

The protein belongs to the histidinol dehydrogenase family. As to quaternary structure, homodimer. Requires Zn(2+) as cofactor.

The enzyme catalyses L-histidinol + 2 NAD(+) + H2O = L-histidine + 2 NADH + 3 H(+). It participates in amino-acid biosynthesis; L-histidine biosynthesis; L-histidine from 5-phospho-alpha-D-ribose 1-diphosphate: step 9/9. Its function is as follows. Catalyzes the sequential NAD-dependent oxidations of L-histidinol to L-histidinaldehyde and then to L-histidine. The sequence is that of Histidinol dehydrogenase (hisD) from Buchnera aphidicola subsp. Diuraphis noxia.